The primary structure comprises 451 residues: Tubulin alpha-2 chain (451 aa).

Glutamine 11 serves as a coordination point for GTP. Lysine 40 is modified (N6-acetyllysine). 6 residues coordinate GTP: glutamate 71, glycine 144, threonine 145, threonine 179, asparagine 206, and asparagine 228. Glutamate 71 lines the Mg(2+) pocket. Glutamate 254 is an active-site residue.

The protein belongs to the tubulin family. Dimer of alpha and beta chains. A typical microtubule is a hollow water-filled tube with an outer diameter of 25 nm and an inner diameter of 15 nM. Alpha-beta heterodimers associate head-to-tail to form protofilaments running lengthwise along the microtubule wall with the beta-tubulin subunit facing the microtubule plus end conferring a structural polarity. Microtubules usually have 13 protofilaments but different protofilament numbers can be found in some organisms and specialized cells. It depends on Mg(2+) as a cofactor. Undergoes a tyrosination/detyrosination cycle, the cyclic removal and re-addition of a C-terminal tyrosine residue by the enzymes tubulin tyrosine carboxypeptidase (TTCP) and tubulin tyrosine ligase (TTL), respectively.

It localises to the cytoplasm. Its subcellular location is the cytoskeleton. The enzyme catalyses GTP + H2O = GDP + phosphate + H(+). Functionally, tubulin is the major constituent of microtubules, a cylinder consisting of laterally associated linear protofilaments composed of alpha- and beta-tubulin heterodimers. Microtubules grow by the addition of GTP-tubulin dimers to the microtubule end, where a stabilizing cap forms. Below the cap, tubulin dimers are in GDP-bound state, owing to GTPase activity of alpha-tubulin. In Chlamydomonas reinhardtii (Chlamydomonas smithii), this protein is Tubulin alpha-2 chain (TUBA2).